We begin with the raw amino-acid sequence, 318 residues long: Formimidoylglutamase (318 aa).

Residues H124, D153, H155, D157, C241, and D243 each coordinate Mn(2+).

This sequence belongs to the arginase family. Requires Mn(2+) as cofactor.

It catalyses the reaction N-formimidoyl-L-glutamate + H2O = formamide + L-glutamate. Its pathway is amino-acid degradation; L-histidine degradation into L-glutamate; L-glutamate from N-formimidoyl-L-glutamate (hydrolase route): step 1/1. Functionally, catalyzes the conversion of N-formimidoyl-L-glutamate to L-glutamate and formamide. The protein is Formimidoylglutamase of Fusobacterium nucleatum subsp. nucleatum (strain ATCC 25586 / DSM 15643 / BCRC 10681 / CIP 101130 / JCM 8532 / KCTC 2640 / LMG 13131 / VPI 4355).